A 249-amino-acid chain; its full sequence is 1-(5-phosphoribosyl)-5-[(5-phosphoribosylamino)methylideneamino] imidazole-4-carboxamide isomerase (249 aa).

Catalysis depends on D8, which acts as the Proton acceptor. The active-site Proton donor is D131.

It belongs to the HisA/HisF family.

The protein resides in the cytoplasm. The enzyme catalyses 1-(5-phospho-beta-D-ribosyl)-5-[(5-phospho-beta-D-ribosylamino)methylideneamino]imidazole-4-carboxamide = 5-[(5-phospho-1-deoxy-D-ribulos-1-ylimino)methylamino]-1-(5-phospho-beta-D-ribosyl)imidazole-4-carboxamide. It participates in amino-acid biosynthesis; L-histidine biosynthesis; L-histidine from 5-phospho-alpha-D-ribose 1-diphosphate: step 4/9. In Nitrosomonas europaea (strain ATCC 19718 / CIP 103999 / KCTC 2705 / NBRC 14298), this protein is 1-(5-phosphoribosyl)-5-[(5-phosphoribosylamino)methylideneamino] imidazole-4-carboxamide isomerase.